A 76-amino-acid polypeptide reads, in one-letter code: Acyl carrier protein (76 aa).

The Carrier domain occupies 1 to 75; the sequence is MVLEKIKTLM…DVVLYIEKNL (75 aa). At serine 35 the chain carries O-(pantetheine 4'-phosphoryl)serine.

This sequence belongs to the acyl carrier protein (ACP) family. 4'-phosphopantetheine is transferred from CoA to a specific serine of apo-ACP by AcpS. This modification is essential for activity because fatty acids are bound in thioester linkage to the sulfhydryl of the prosthetic group.

The protein localises to the cytoplasm. Its pathway is lipid metabolism; fatty acid biosynthesis. In terms of biological role, carrier of the growing fatty acid chain in fatty acid biosynthesis. This Phytoplasma australiense protein is Acyl carrier protein.